Consider the following 288-residue polypeptide: Small ribosomal subunit protein uS9m (288 aa).

A disordered region spans residues 269 to 288 (VERKKPGKKKARKMPTWVKR).

It belongs to the universal ribosomal protein uS9 family.

Its subcellular location is the mitochondrion. This chain is Small ribosomal subunit protein uS9m (MRPS9), found in Candida glabrata (strain ATCC 2001 / BCRC 20586 / JCM 3761 / NBRC 0622 / NRRL Y-65 / CBS 138) (Yeast).